A 142-amino-acid chain; its full sequence is MFLGTHPVRLDDKNRFVLPAKFRGMLDSVVLTRGQERCLYLFDRSEFERISDGIRNTALSQKKVRDYLRIFLSGAAAQLPDRQHRIVIANHLRAYADLKKEVTVIGAGKHIEIWDSEAWSSYLEEQEAAFSEIAEEVIPGLI.

SpoVT-AbrB domains are found at residues Thr5–Glu46 and Ala75–Ala118.

Belongs to the MraZ family. Forms oligomers.

It is found in the cytoplasm. It localises to the nucleoid. In Tropheryma whipplei (strain TW08/27) (Whipple's bacillus), this protein is Transcriptional regulator MraZ.